The chain runs to 282 residues: 4-hydroxy-3-methylbut-2-enyl diphosphate reductase (282 aa).

Residue C12 participates in [4Fe-4S] cluster binding. H40 and H72 together coordinate (2E)-4-hydroxy-3-methylbut-2-enyl diphosphate. 2 residues coordinate dimethylallyl diphosphate: H40 and H72. Isopentenyl diphosphate contacts are provided by H40 and H72. A [4Fe-4S] cluster-binding site is contributed by C94. H122 provides a ligand contact to (2E)-4-hydroxy-3-methylbut-2-enyl diphosphate. Position 122 (H122) interacts with dimethylallyl diphosphate. H122 is an isopentenyl diphosphate binding site. E124 serves as the catalytic Proton donor. T160 lines the (2E)-4-hydroxy-3-methylbut-2-enyl diphosphate pocket. Residue C188 participates in [4Fe-4S] cluster binding. (2E)-4-hydroxy-3-methylbut-2-enyl diphosphate-binding residues include S216, N218, and S260. Positions 216, 218, and 260 each coordinate dimethylallyl diphosphate. Residues S216, N218, and S260 each contribute to the isopentenyl diphosphate site.

The protein belongs to the IspH family. [4Fe-4S] cluster is required as a cofactor.

It catalyses the reaction isopentenyl diphosphate + 2 oxidized [2Fe-2S]-[ferredoxin] + H2O = (2E)-4-hydroxy-3-methylbut-2-enyl diphosphate + 2 reduced [2Fe-2S]-[ferredoxin] + 2 H(+). The enzyme catalyses dimethylallyl diphosphate + 2 oxidized [2Fe-2S]-[ferredoxin] + H2O = (2E)-4-hydroxy-3-methylbut-2-enyl diphosphate + 2 reduced [2Fe-2S]-[ferredoxin] + 2 H(+). It participates in isoprenoid biosynthesis; dimethylallyl diphosphate biosynthesis; dimethylallyl diphosphate from (2E)-4-hydroxy-3-methylbutenyl diphosphate: step 1/1. It functions in the pathway isoprenoid biosynthesis; isopentenyl diphosphate biosynthesis via DXP pathway; isopentenyl diphosphate from 1-deoxy-D-xylulose 5-phosphate: step 6/6. In terms of biological role, catalyzes the conversion of 1-hydroxy-2-methyl-2-(E)-butenyl 4-diphosphate (HMBPP) into a mixture of isopentenyl diphosphate (IPP) and dimethylallyl diphosphate (DMAPP). Acts in the terminal step of the DOXP/MEP pathway for isoprenoid precursor biosynthesis. This chain is 4-hydroxy-3-methylbut-2-enyl diphosphate reductase, found in Geotalea uraniireducens (strain Rf4) (Geobacter uraniireducens).